Reading from the N-terminus, the 67-residue chain is Neurotoxin Cex9 (67 aa).

The LCN-type CS-alpha/beta domain occupies 1–65; that stretch reads KDGYPVEVTG…TWPLPNKSCG (65 aa). Cystine bridges form between C11/C64, C15/C40, C24/C45, and C28/C47. Residue C64 is modified to Cysteine amide. Residues 65 to 67 constitute a propeptide that is removed on maturation; that stretch reads GKK.

Belongs to the long (4 C-C) scorpion toxin superfamily. Sodium channel inhibitor family. Beta subfamily. Expressed by the venom gland.

It is found in the secreted. Functionally, beta toxins bind voltage-independently at site-4 of sodium channels (Nav) and shift the voltage of activation toward more negative potentials thereby affecting sodium channel activation and promoting spontaneous and repetitive firing. The sequence is that of Neurotoxin Cex9 from Centruroides exilicauda (Bark scorpion).